A 1219-amino-acid polypeptide reads, in one-letter code: ATP-dependent helicase/nuclease subunit A (1219 aa).

Residues 12–477 (TRWTDNQWKS…IDLSQNFRSR (466 aa)) enclose the UvrD-like helicase ATP-binding domain. 33–40 (AAAGSGKT) lines the ATP pocket. One can recognise a UvrD-like helicase C-terminal domain in the interval 478-786 (EEVLTTTNYL…RMMTIHSSKG (309 aa)). Residues 997 to 1016 (PSKQSVSELKRQHETEQSDT) are disordered. The segment covering 1004 to 1016 (ELKRQHETEQSDT) has biased composition (basic and acidic residues).

The protein belongs to the helicase family. AddA subfamily. Heterodimer of AddA and AddB/RexB. The cofactor is Mg(2+).

The catalysed reaction is Couples ATP hydrolysis with the unwinding of duplex DNA by translocating in the 3'-5' direction.. The enzyme catalyses ATP + H2O = ADP + phosphate + H(+). In terms of biological role, the heterodimer acts as both an ATP-dependent DNA helicase and an ATP-dependent, dual-direction single-stranded exonuclease. Recognizes the chi site generating a DNA molecule suitable for the initiation of homologous recombination. The AddA nuclease domain is required for chi fragment generation; this subunit has the helicase and 3' -&gt; 5' nuclease activities. In Staphylococcus saprophyticus subsp. saprophyticus (strain ATCC 15305 / DSM 20229 / NCIMB 8711 / NCTC 7292 / S-41), this protein is ATP-dependent helicase/nuclease subunit A.